Here is a 663-residue protein sequence, read N- to C-terminus: UvrABC system protein B (663 aa).

Residues 1 to 10 (MIDKRDDKPF) show a composition bias toward basic and acidic residues. Residues 1-23 (MIDKRDDKPFKLKSKYKPSGDQP) form a disordered region. The Helicase ATP-binding domain maps to 31-418 (DNIEGGEKAQ…TNTIIEQIIR (388 aa)). 44 to 51 (GATGTGKT) contributes to the ATP binding site. Residues 97–120 (YYDYYQPEAYVPSSDTYIEKDSSV) carry the Beta-hairpin motif. Residues 435–601 (QMDDLLGEIN…TIKKDIRGLI (167 aa)) enclose the Helicase C-terminal domain. The UVR domain maps to 627–662 (KEAINALQKQMQEAAELLDFELAAQMRDLILELKLM).

The protein belongs to the UvrB family. In terms of assembly, forms a heterotetramer with UvrA during the search for lesions. Interacts with UvrC in an incision complex.

It is found in the cytoplasm. The UvrABC repair system catalyzes the recognition and processing of DNA lesions. A damage recognition complex composed of 2 UvrA and 2 UvrB subunits scans DNA for abnormalities. Upon binding of the UvrA(2)B(2) complex to a putative damaged site, the DNA wraps around one UvrB monomer. DNA wrap is dependent on ATP binding by UvrB and probably causes local melting of the DNA helix, facilitating insertion of UvrB beta-hairpin between the DNA strands. Then UvrB probes one DNA strand for the presence of a lesion. If a lesion is found the UvrA subunits dissociate and the UvrB-DNA preincision complex is formed. This complex is subsequently bound by UvrC and the second UvrB is released. If no lesion is found, the DNA wraps around the other UvrB subunit that will check the other stand for damage. This Streptococcus pyogenes serotype M3 (strain ATCC BAA-595 / MGAS315) protein is UvrABC system protein B.